We begin with the raw amino-acid sequence, 468 residues long: tRNA (guanine(37)-N(1))-methyltransferase 1 (468 aa).

S-adenosyl-L-methionine is bound by residues His-207, 245 to 246 (DL), and 273 to 274 (DA). The segment at 301-348 (KEAAVSRGGETNSSGEEIRESNASINEPLGANKKPSGTTKTENGVGKD) is disordered. A compositionally biased stretch (polar residues) spans 309 to 325 (GETNSSGEEIRESNASI). Asn-380 lines the S-adenosyl-L-methionine pocket.

The protein belongs to the class I-like SAM-binding methyltransferase superfamily. TRM5/TYW2 family. In terms of assembly, monomer.

It localises to the mitochondrion matrix. Its subcellular location is the nucleus. It is found in the cytoplasm. The enzyme catalyses guanosine(37) in tRNA + S-adenosyl-L-methionine = N(1)-methylguanosine(37) in tRNA + S-adenosyl-L-homocysteine + H(+). Functionally, specifically methylates the N1 position of guanosine-37 in various cytoplasmic and mitochondrial tRNAs. Methylation is not dependent on the nature of the nucleoside 5' of the target nucleoside. This is the first step in the biosynthesis of wybutosine (yW), a modified base adjacent to the anticodon of tRNAs and required for accurate decoding. This is tRNA (guanine(37)-N(1))-methyltransferase 1 from Arabidopsis thaliana (Mouse-ear cress).